We begin with the raw amino-acid sequence, 568 residues long: Probable asparagine--tRNA ligase, cytoplasmic (568 aa).

It belongs to the class-II aminoacyl-tRNA synthetase family.

Its subcellular location is the cytoplasm. The catalysed reaction is tRNA(Asn) + L-asparagine + ATP = L-asparaginyl-tRNA(Asn) + AMP + diphosphate + H(+). Its function is as follows. Cytosolic asparaginyl-tRNA synthetase which catalyzes the specific attachment of asparagine to its cognate tRNA. This chain is Probable asparagine--tRNA ligase, cytoplasmic (nrs1), found in Schizosaccharomyces pombe (strain 972 / ATCC 24843) (Fission yeast).